The sequence spans 174 residues: Gamma-crystallin C (174 aa).

Beta/gamma crystallin 'Greek key' domains are found at residues glycine 2 to serine 40 and glycine 41 to proline 83. At cysteine 23 the chain carries S-methylcysteine. Positions glutamine 84–serine 87 are connecting peptide. Beta/gamma crystallin 'Greek key' domains are found at residues histidine 88 to glutamate 128 and glycine 129 to valine 171.

It belongs to the beta/gamma-crystallin family. Monomer.

Functionally, crystallins are the dominant structural components of the vertebrate eye lens. The sequence is that of Gamma-crystallin C (CRYGC) from Homo sapiens (Human).